The primary structure comprises 270 residues: Shikimate dehydrogenase (NADP(+)) (270 aa).

Residues 14 to 16 and Thr-61 contribute to the shikimate site; that span reads SKS. Residue Lys-65 is the Proton acceptor of the active site. Positions 86 and 101 each coordinate shikimate. Residues 126-130, 150-155, and Met-213 contribute to the NADP(+) site; these read GAGGA and NRTVSK. Tyr-215 contributes to the shikimate binding site. Residue Gly-237 coordinates NADP(+).

It belongs to the shikimate dehydrogenase family. As to quaternary structure, homodimer.

The catalysed reaction is shikimate + NADP(+) = 3-dehydroshikimate + NADPH + H(+). It participates in metabolic intermediate biosynthesis; chorismate biosynthesis; chorismate from D-erythrose 4-phosphate and phosphoenolpyruvate: step 4/7. Functionally, involved in the biosynthesis of the chorismate, which leads to the biosynthesis of aromatic amino acids. Catalyzes the reversible NADPH linked reduction of 3-dehydroshikimate (DHSA) to yield shikimate (SA). This is Shikimate dehydrogenase (NADP(+)) from Hahella chejuensis (strain KCTC 2396).